The sequence spans 58 residues: ComX pheromone (58 aa).

The propeptide occupies Met1–Lys52. Trp56 is lipidated: 3'-geranyl-2',N2-cyclotryptophan; in strain RO-E-2 /NRRL B-23055.

As to quaternary structure, interacts directly with the sensor histidine kinase ComP and stimulates its activity. In terms of processing, trp-56 is modified by geranylation, which is essential for activity. Modified by the tryptophan prenyltransferase ComQ before export to the extracellular environment. The type of isoprenyl derivative differs among the different pherotypes and depends on ComX primary sequence.

It is found in the secreted. Its function is as follows. Part of a major quorum-sensing system that regulates the development of genetic competence. Acts through the activation of the two-component regulatory system ComP/ComA composed of a sensor histidine kinase, ComP, and a response regulator, ComA. In Bacillus spizizenii (Bacillus subtilis subsp. spizizenii), this protein is ComX pheromone.